Consider the following 975-residue polypeptide: Exportin-2 (975 aa).

Positions A29–H105 constitute an Importin N-terminal domain.

It belongs to the XPO2/CSE1 family. Binds with high affinity to importin-alpha only in the presence of RanGTP.

The protein localises to the cytoplasm. The protein resides in the nucleus. Export receptor for importin alpha. Mediates importin-alpha re-export from the nucleus to the cytoplasm after import substrates have been released into the nucleoplasm. This chain is Exportin-2, found in Drosophila melanogaster (Fruit fly).